The following is a 346-amino-acid chain: Phosphoribosylformylglycinamidine cyclo-ligase (346 aa).

The protein belongs to the AIR synthase family.

It is found in the cytoplasm. The catalysed reaction is 2-formamido-N(1)-(5-O-phospho-beta-D-ribosyl)acetamidine + ATP = 5-amino-1-(5-phospho-beta-D-ribosyl)imidazole + ADP + phosphate + H(+). It participates in purine metabolism; IMP biosynthesis via de novo pathway; 5-amino-1-(5-phospho-D-ribosyl)imidazole from N(2)-formyl-N(1)-(5-phospho-D-ribosyl)glycinamide: step 2/2. This Geobacillus kaustophilus (strain HTA426) protein is Phosphoribosylformylglycinamidine cyclo-ligase.